A 106-amino-acid polypeptide reads, in one-letter code: Protein aveugle (106 aa).

Positions 26-91 (WTVSDVLKWY…WREIVKQRLK (66 aa)) constitute an SAM domain.

As to quaternary structure, interacts with the SAM domain of cnk.

The protein resides in the cytoplasm. It is found in the membrane. In terms of biological role, required for normal photoreceptor differentiation between Ras and Raf for EGFR signaling in the eye and for mitogen-activated protein kinase phosphorylation. Probably acts together with Cnk to promote Raf activation, perhaps by recruiting an activating kinase. In Drosophila melanogaster (Fruit fly), this protein is Protein aveugle (ave).